The following is a 692-amino-acid chain: Elongation factor G (692 aa).

Residues Ala8 to Leu282 enclose the tr-type G domain. Residues Ala17 to Thr24, Asp81 to His85, and Asn135 to Asp138 each bind GTP.

The protein belongs to the TRAFAC class translation factor GTPase superfamily. Classic translation factor GTPase family. EF-G/EF-2 subfamily.

It is found in the cytoplasm. In terms of biological role, catalyzes the GTP-dependent ribosomal translocation step during translation elongation. During this step, the ribosome changes from the pre-translocational (PRE) to the post-translocational (POST) state as the newly formed A-site-bound peptidyl-tRNA and P-site-bound deacylated tRNA move to the P and E sites, respectively. Catalyzes the coordinated movement of the two tRNA molecules, the mRNA and conformational changes in the ribosome. The sequence is that of Elongation factor G from Streptococcus equi subsp. zooepidemicus (strain MGCS10565).